Consider the following 221-residue polypeptide: uncharacterized protein (221 aa).

It is found in the mitochondrion. This is an uncharacterized protein from Paramecium tetraurelia.